We begin with the raw amino-acid sequence, 216 residues long: Adenylate kinase (216 aa).

Residue Gly-10–Thr-15 coordinates ATP. The NMP stretch occupies residues Ser-30–Val-59. AMP-binding positions include Thr-31, Arg-36, Leu-57 to Val-59, Gly-85 to Arg-88, and Gln-92. Residues Gly-126 to Asp-163 form an LID region. Position 127 (Arg-127) interacts with ATP. Residues Cys-130 and Cys-133 each coordinate Zn(2+). Thr-136–Phe-137 contributes to the ATP binding site. The Zn(2+) site is built by Cys-150 and Cys-153. AMP contacts are provided by Arg-160 and Arg-171. Lys-199 contributes to the ATP binding site.

This sequence belongs to the adenylate kinase family. As to quaternary structure, monomer.

The protein localises to the cytoplasm. The enzyme catalyses AMP + ATP = 2 ADP. The protein operates within purine metabolism; AMP biosynthesis via salvage pathway; AMP from ADP: step 1/1. In terms of biological role, catalyzes the reversible transfer of the terminal phosphate group between ATP and AMP. Plays an important role in cellular energy homeostasis and in adenine nucleotide metabolism. The chain is Adenylate kinase from Alkaliphilus oremlandii (strain OhILAs) (Clostridium oremlandii (strain OhILAs)).